Reading from the N-terminus, the 237-residue chain is Ribosomal RNA small subunit methyltransferase G (237 aa).

S-adenosyl-L-methionine is bound by residues Gly78, Phe83, 129–130 (AE), and Arg148.

It belongs to the methyltransferase superfamily. RNA methyltransferase RsmG family.

Its subcellular location is the cytoplasm. In terms of biological role, specifically methylates the N7 position of a guanine in 16S rRNA. The polypeptide is Ribosomal RNA small subunit methyltransferase G (Streptococcus thermophilus (strain CNRZ 1066)).